The sequence spans 325 residues: Ribosomal RNA small subunit methyltransferase H (325 aa).

Residues 45–47 (GGH), aspartate 65, tyrosine 92, aspartate 113, and glutamine 120 each bind S-adenosyl-L-methionine.

Belongs to the methyltransferase superfamily. RsmH family.

The protein resides in the cytoplasm. The enzyme catalyses cytidine(1402) in 16S rRNA + S-adenosyl-L-methionine = N(4)-methylcytidine(1402) in 16S rRNA + S-adenosyl-L-homocysteine + H(+). Functionally, specifically methylates the N4 position of cytidine in position 1402 (C1402) of 16S rRNA. The chain is Ribosomal RNA small subunit methyltransferase H from Oleidesulfovibrio alaskensis (strain ATCC BAA-1058 / DSM 17464 / G20) (Desulfovibrio alaskensis).